The primary structure comprises 790 residues: Histone-lysine N-methyltransferase, H3 lysine-9 specific SUVH6 (790 aa).

Residues Q251–N271 are disordered. Positions G256 to S268 are enriched in low complexity. The YDG domain occupies G330–R482. A Pre-SET domain is found at K551–G613. Zn(2+) contacts are provided by C553, C554, C555, C559, C567, C569, C595, C599, C601, and C605. In terms of domain architecture, SET spans L616 to N760. S-adenosyl-L-methionine is bound by residues R626–W628, D662, Y664, R714, and N717–H718. C720, C778, C780, and C785 together coordinate Zn(2+). The region spanning K774–Y790 is the Post-SET domain.

Belongs to the class V-like SAM-binding methyltransferase superfamily. Histone-lysine methyltransferase family. Suvar3-9 subfamily.

The protein localises to the nucleus. Its subcellular location is the chromosome. The protein resides in the centromere. It catalyses the reaction N(6)-methyl-L-lysyl(9)-[histone H3] + S-adenosyl-L-methionine = N(6),N(6)-dimethyl-L-lysyl(9)-[histone H3] + S-adenosyl-L-homocysteine + H(+). The catalysed reaction is L-lysyl(9)-[histone H3] + S-adenosyl-L-methionine = N(6)-methyl-L-lysyl(9)-[histone H3] + S-adenosyl-L-homocysteine + H(+). Histone methyltransferase. Methylates 'Lys-9' of histone H3. H3 'Lys-9' methylation represents a specific tag for epigenetic transcriptional repression. Seems to act preferentially on dsMRNA. This chain is Histone-lysine N-methyltransferase, H3 lysine-9 specific SUVH6 (SUVH6), found in Arabidopsis thaliana (Mouse-ear cress).